We begin with the raw amino-acid sequence, 329 residues long: BTB/POZ domain-containing adapter for CUL3-mediated RhoA degradation protein 1 (329 aa).

Low complexity predominate over residues 1–15 (MSAEASGPAAAEAPS). The disordered stretch occupies residues 1 to 21 (MSAEASGPAAAEAPSLEVAKP). One can recognise a BTB domain in the interval 41–109 (KYVKLNVGGS…LRDGSVPLPE (69 aa)). The disordered stretch occupies residues 280-302 (LEATGGAAGGGGASRGEDEDNRE).

It belongs to the BACURD family. In terms of assembly, homotetramer; forms a two-fold symmetric tetramer in solution. Interacts with CUL3; interaction is direct and forms a 5:5 heterodecamer. Component of the BCR(KCTD13) E3 ubiquitin ligase complex, at least composed of CUL3, KCTD13/BACURD1 and RBX1. Interacts with RHOA; with a preference for RhoA-GDP. Interacts with POLD2 and PCNA. Interacts with SPRTN.

The protein resides in the nucleus. Its pathway is protein modification; protein ubiquitination. Substrate-specific adapter of a BCR (BTB-CUL3-RBX1) E3 ubiquitin-protein ligase complex required for synaptic transmission. The BCR(KCTD13) E3 ubiquitin ligase complex mediates the ubiquitination of RHOA, leading to its degradation by the proteasome, thereby regulating the actin cytoskeleton and promoting synaptic transmission. This Bos taurus (Bovine) protein is BTB/POZ domain-containing adapter for CUL3-mediated RhoA degradation protein 1 (KCTD13).